We begin with the raw amino-acid sequence, 229 residues long: MIQVIVTDIEGTTTDIRFVHQVLFPYARERLTPFLRAHQQDDDIAALLVDLRREIAQPDADIETLITVLHGFMDEDRKSTVLKAIQGIIWRTGYLQADFRGHVYPEVAQQLADWHQQGLKLYVYSSGSVAAQKLLFGYSDAGDLCPLFSGYFDTHVGAKRDVSAYQKIANQLGIAPQALLFLSDIRQELDAAQLAGWHTCQLIRDLPDNDSAHPQVNRFDQIVLSLFTE.

The protein belongs to the HAD-like hydrolase superfamily. MasA/MtnC family. As to quaternary structure, monomer. It depends on Mg(2+) as a cofactor.

It carries out the reaction 5-methylsulfanyl-2,3-dioxopentyl phosphate + H2O = 1,2-dihydroxy-5-(methylsulfanyl)pent-1-en-3-one + phosphate. It participates in amino-acid biosynthesis; L-methionine biosynthesis via salvage pathway; L-methionine from S-methyl-5-thio-alpha-D-ribose 1-phosphate: step 3/6. The protein operates within amino-acid biosynthesis; L-methionine biosynthesis via salvage pathway; L-methionine from S-methyl-5-thio-alpha-D-ribose 1-phosphate: step 4/6. Its function is as follows. Bifunctional enzyme that catalyzes the enolization of 2,3-diketo-5-methylthiopentyl-1-phosphate (DK-MTP-1-P) into the intermediate 2-hydroxy-3-keto-5-methylthiopentenyl-1-phosphate (HK-MTPenyl-1-P), which is then dephosphorylated to form the acireductone 1,2-dihydroxy-3-keto-5-methylthiopentene (DHK-MTPene). The protein is Enolase-phosphatase E1 of Yersinia pseudotuberculosis serotype O:1b (strain IP 31758).